Here is a 471-residue protein sequence, read N- to C-terminus: Eukaryotic translation initiation factor 3 subunit M (471 aa).

A disordered region spans residues 39–61 (EISSLLEPLRQQEQSEEEPDRKQ). A PCI domain is found at 206–377 (DFELAQSHVV…SEFLVHRATY (172 aa)). The tract at residues 419–471 (QAATEEANQGKSGEKGGKGGDRRRNPQHQQQQQQSQPSQPQQPRETELVAGAE) is disordered. The span at 430–442 (SGEKGGKGGDRRR) shows a compositional bias: basic and acidic residues. Positions 445–461 (QHQQQQQQSQPSQPQQP) are enriched in low complexity.

It belongs to the eIF-3 subunit M family. In terms of assembly, component of the eukaryotic translation initiation factor 3 (eIF-3) complex.

It localises to the cytoplasm. Component of the eukaryotic translation initiation factor 3 (eIF-3) complex, which is involved in protein synthesis of a specialized repertoire of mRNAs and, together with other initiation factors, stimulates binding of mRNA and methionyl-tRNAi to the 40S ribosome. The eIF-3 complex specifically targets and initiates translation of a subset of mRNAs involved in cell proliferation. In Aspergillus clavatus (strain ATCC 1007 / CBS 513.65 / DSM 816 / NCTC 3887 / NRRL 1 / QM 1276 / 107), this protein is Eukaryotic translation initiation factor 3 subunit M.